The primary structure comprises 535 residues: MLITGLIIGCLLIGLVIGYVVRQHQHRQELLAVQKQARDIIASATAETQQKIAKLTADSRRETLTYQQSVKDELAEQTSDIAVREQRRQQREQLLGQMGVRLADQTAILDERSQANRDQRQKIRDLKAQALQLRTDRDEMLAQQAGIDEQAAKDHVLADTELDLKRDRDVEIKALNDNAVANAERWAKDVVLSATESGPQDLPKEHLEHTVTVPNGEIRSKIIGRDGQHIRLLETLTGTDLIFVPDDNTTLFISTHDPIRREVARVALTNLVASRRISSNQIETQVENAQRDVNHSLWETGEQTVSGLHVGWMHPDLMKLIGRLKYRTSYGQNVLLHSIEVAQLTGAMAARLGYNTRLARRAGLLHDLGKAIDHEVEGTHVEIGTEFAQKYGEDDVVINAIAAHHGDVEKTSPLAELVAAADAISGARPGARSESVEDYINRLRALEKIANDQSGVAESYAIQAGRELRIIVKPQELDDTAAANLTQEVAQQIESTLTYPGKIKVTTIRKSTAVEYVGDEKKKKSKKKKKKAANA.

A helical transmembrane segment spans residues 1–21 (MLITGLIIGCLLIGLVIGYVV). The KH domain maps to 207 to 268 (LEHTVTVPNG…IRREVARVAL (62 aa)). Residues 334–427 (VLLHSIEVAQ…VAAADAISGA (94 aa)) form the HD domain.

Belongs to the RNase Y family.

It localises to the cell membrane. Its function is as follows. Endoribonuclease that initiates mRNA decay. The polypeptide is Ribonuclease Y 2 (Levilactobacillus brevis (strain ATCC 367 / BCRC 12310 / CIP 105137 / JCM 1170 / LMG 11437 / NCIMB 947 / NCTC 947) (Lactobacillus brevis)).